Reading from the N-terminus, the 280-residue chain is P32 adhesin (280 aa).

Transmembrane regions (helical) follow at residues 13–37 and 68–92; these read FIVL…ALVV and WFIP…AIGL. The span at 114–128 shows a compositional bias: polar residues; that stretch reads EQLQRISDQQEQQTV. 2 disordered regions span residues 114-149 and 163-280; these read EQLQ…QPLQ and FNPN…GLKP. Low complexity-rich tracts occupy residues 132 to 149 and 168 to 188; these read PQQS…QPLQ and QQRP…NFNP. Repeat copies occupy residues 163–168, 170–174, 186–190, 191–195, 196–200, 199–204, 206–210, 222–226, 227–231, 232–236, 249–254, 256–260, and 259–264. The segment at 163–264 is 6 X 5 AA repeats of [FM]-N-P-N-M-Q; it reads FNPNMQQRPG…QRPGFNPNMQ (102 aa). Residues 170–260 are 5 X 5 AA repeats of R-P-G-F-N; sequence RPGFNQPNQQ…PNMQQRPGFN (91 aa). The tract at residues 186–226 is 2 X 5 AA repeats of F-N-P-R-M; the sequence is FNPRMNPNMQRPGFNPNMQQRPGFNQPNQQFQPHNNFNPRM. Residues 204 to 224 show a composition bias toward low complexity; it reads QQRPGFNQPNQQFQPHNNFNP. Residues 235-257 show a composition bias toward low complexity; it reads FNQPHPNQFAQPNNFNPNMQQRP. Residues 261–271 show a composition bias toward polar residues; the sequence is PNMQQRPNPSQ.

It is found in the cell projection. The protein localises to the attachment organelle membrane. Its function is as follows. Adhesin necessary for successful cytadherence and virulence. This Mycoplasma genitalium (strain ATCC 33530 / DSM 19775 / NCTC 10195 / G37) (Mycoplasmoides genitalium) protein is P32 adhesin.